The sequence spans 178 residues: ATP-dependent protease subunit HslV (178 aa).

Threonine 7 is an active-site residue. 3 residues coordinate Na(+): glycine 162, cysteine 165, and threonine 168.

Belongs to the peptidase T1B family. HslV subfamily. In terms of assembly, a double ring-shaped homohexamer of HslV is capped on each side by a ring-shaped HslU homohexamer. The assembly of the HslU/HslV complex is dependent on binding of ATP.

The protein localises to the cytoplasm. It catalyses the reaction ATP-dependent cleavage of peptide bonds with broad specificity.. With respect to regulation, allosterically activated by HslU binding. Functionally, protease subunit of a proteasome-like degradation complex believed to be a general protein degrading machinery. The chain is ATP-dependent protease subunit HslV from Cupriavidus necator (strain ATCC 17699 / DSM 428 / KCTC 22496 / NCIMB 10442 / H16 / Stanier 337) (Ralstonia eutropha).